Here is a 259-residue protein sequence, read N- to C-terminus: Proteasome subunit alpha (259 aa).

Residues 226-259 (LAEGSATSATSATPGEAEAPATAPEGDVDTGSNG) form a disordered region. Low complexity predominate over residues 227-250 (AEGSATSATSATPGEAEAPATAPE).

It belongs to the peptidase T1A family. The 20S proteasome core is composed of 14 alpha and 14 beta subunits that assemble into four stacked heptameric rings, resulting in a barrel-shaped structure. The two inner rings, each composed of seven catalytic beta subunits, are sandwiched by two outer rings, each composed of seven alpha subunits. The catalytic chamber with the active sites is on the inside of the barrel. Has a gated structure, the ends of the cylinder being occluded by the N-termini of the alpha-subunits. Is capped by the proteasome-associated ATPase, ARC.

It localises to the cytoplasm. Its pathway is protein degradation; proteasomal Pup-dependent pathway. With respect to regulation, the formation of the proteasomal ATPase ARC-20S proteasome complex, likely via the docking of the C-termini of ARC into the intersubunit pockets in the alpha-rings, may trigger opening of the gate for substrate entry. Interconversion between the open-gate and close-gate conformations leads to a dynamic regulation of the 20S proteasome proteolysis activity. Component of the proteasome core, a large protease complex with broad specificity involved in protein degradation. The sequence is that of Proteasome subunit alpha from Streptosporangium roseum (strain ATCC 12428 / DSM 43021 / JCM 3005 / KCTC 9067 / NCIMB 10171 / NRRL 2505 / NI 9100).